The sequence spans 61 residues: uncharacterized protein (61 aa).

Residues 38–61 (TPRPFTPGLADPRRLGPRRVQAAQ) form a disordered region.

This is an uncharacterized protein from Homo sapiens (Human).